A 266-amino-acid chain; its full sequence is Tryptophan synthase alpha chain (266 aa).

Catalysis depends on proton acceptor residues E50 and D61.

This sequence belongs to the TrpA family. As to quaternary structure, tetramer of two alpha and two beta chains.

It catalyses the reaction (1S,2R)-1-C-(indol-3-yl)glycerol 3-phosphate + L-serine = D-glyceraldehyde 3-phosphate + L-tryptophan + H2O. It participates in amino-acid biosynthesis; L-tryptophan biosynthesis; L-tryptophan from chorismate: step 5/5. In terms of biological role, the alpha subunit is responsible for the aldol cleavage of indoleglycerol phosphate to indole and glyceraldehyde 3-phosphate. In Alkaliphilus metalliredigens (strain QYMF), this protein is Tryptophan synthase alpha chain.